A 508-amino-acid polypeptide reads, in one-letter code: Photosystem II CP47 reaction center protein (508 aa).

6 helical membrane-spanning segments follow: residues 21–36, 101–115, 140–156, 203–218, 237–252, and 457–472; these read AVHL…WAGS, IVLS…IWHW, GIHL…FGAF, IAAG…FHLS, VLSS…AFVV, and CFAL…HGSR.

It belongs to the PsbB/PsbC family. PsbB subfamily. In terms of assembly, PSII is composed of 1 copy each of membrane proteins PsbA, PsbB, PsbC, PsbD, PsbE, PsbF, PsbH, PsbI, PsbJ, PsbK, PsbL, PsbM, PsbT, PsbX, PsbY, PsbZ, Psb30/Ycf12, at least 3 peripheral proteins of the oxygen-evolving complex and a large number of cofactors. It forms dimeric complexes. Binds multiple chlorophylls. PSII binds additional chlorophylls, carotenoids and specific lipids. serves as cofactor.

Its subcellular location is the plastid. It is found in the chloroplast thylakoid membrane. In terms of biological role, one of the components of the core complex of photosystem II (PSII). It binds chlorophyll and helps catalyze the primary light-induced photochemical processes of PSII. PSII is a light-driven water:plastoquinone oxidoreductase, using light energy to abstract electrons from H(2)O, generating O(2) and a proton gradient subsequently used for ATP formation. This is Photosystem II CP47 reaction center protein from Zygnema circumcarinatum (Green alga).